Consider the following 115-residue polypeptide: NTF2-related export protein 1 (115 aa).

An NTF2 domain is found at 7 to 115 (YAQEFVQRYY…LVLRSSTNFL (109 aa)).

The protein resides in the nucleus. Functionally, stimulator of protein export for NES-containing proteins. Also plays a role in mRNA nuclear export. The chain is NTF2-related export protein 1 (nxt1) from Schizosaccharomyces pombe (strain 972 / ATCC 24843) (Fission yeast).